The primary structure comprises 95 residues: Protein TusB (95 aa).

Belongs to the DsrH/TusB family. Heterohexamer, formed by a dimer of trimers. The hexameric TusBCD complex contains 2 copies each of TusB, TusC and TusD. The TusBCD complex interacts with TusE.

It localises to the cytoplasm. Functionally, part of a sulfur-relay system required for 2-thiolation of 5-methylaminomethyl-2-thiouridine (mnm(5)s(2)U) at tRNA wobble positions. The sequence is that of Protein TusB from Cronobacter sakazakii (strain ATCC BAA-894) (Enterobacter sakazakii).